Consider the following 178-residue polypeptide: MDKKTVKVIEKYSMPFVQLVLEKGEEDRIFSDLTQIKQVVEKTGLPSFLKQVAVDESDKEKTIAFFQDSVSPLLQNFIQVLAYNHRANLFYDVLVDCLNRLEKETNRFEVTITSAHPLTDEQKTRLLPLIEKKMSLKVRSVKEQIDESLIGGFVIFANHKTIDVSIKQQLKVVKENLK.

This sequence belongs to the ATPase delta chain family. As to quaternary structure, F-type ATPases have 2 components, F(1) - the catalytic core - and F(0) - the membrane proton channel. F(1) has five subunits: alpha(3), beta(3), gamma(1), delta(1), epsilon(1). F(0) has three main subunits: a(1), b(2) and c(10-14). The alpha and beta chains form an alternating ring which encloses part of the gamma chain. F(1) is attached to F(0) by a central stalk formed by the gamma and epsilon chains, while a peripheral stalk is formed by the delta and b chains.

It localises to the cell membrane. F(1)F(0) ATP synthase produces ATP from ADP in the presence of a proton or sodium gradient. F-type ATPases consist of two structural domains, F(1) containing the extramembraneous catalytic core and F(0) containing the membrane proton channel, linked together by a central stalk and a peripheral stalk. During catalysis, ATP synthesis in the catalytic domain of F(1) is coupled via a rotary mechanism of the central stalk subunits to proton translocation. Functionally, this protein is part of the stalk that links CF(0) to CF(1). It either transmits conformational changes from CF(0) to CF(1) or is implicated in proton conduction. This Streptococcus pneumoniae (strain CGSP14) protein is ATP synthase subunit delta.